A 506-amino-acid chain; its full sequence is MEKVEHLNLNIQNILEDVDIDTASSSSDDEPEQAVVKQEKLEAGEQIEEQYDTDSDYDDDIVEFAEATGDFTKKLNAARLNTIGPNAARNRLTVDVERHADTSEDRKRKRVKDRADRATVEQVLDPRTRLVLFRLLQRGTLLNIDGCISTGKEANVYHATGTDNDLAIKIYKTSILTFKDRERYVTGEFRYRHGYCKSNPRKMVAVWAEKEMRNLARMHEVGLPVPKPHLLKGHVLVMDFLGKDGWPAPLLKNANLSQEDAEPMYVGLVRDMRRLYRECKLVHADLSEFNMLVHDGKLWIIDVSQSVEQDHPHALEFLRMDCNNVNKFFRELGVPVLSVRRLFEVIVDPLMSSKEMETIIEEERVLVNSEDDSLFMNAFIPHKLEHVLHFERDGKLAKEGVEANNPFQNIVSKIDLKGDGFGEEHDDSDDNDDEENGKKSRKKRAEPTEEEIQEKERKIAMHTRNREETAEERKERKAAVKEEKREQRKEKIPKHLKKRAHRQHMK.

Residues 22 to 52 (TASSSSDDEPEQAVVKQEKLEAGEQIEEQYD) are disordered. The 365-residue stretch at 142–506 (LNIDGCISTG…KKRAHRQHMK (365 aa)) folds into the Protein kinase domain. ATP-binding positions include 148–156 (ISTGKEANV), K169, and L241. D285 serves as the catalytic Proton acceptor. An ATP-binding site is contributed by N290. Residues N290 and D302 each coordinate Mg(2+). Residue D302 is the 4-aspartylphosphate intermediate of the active site. Residues 418–506 (GDGFGEEHDD…KKRAHRQHMK (89 aa)) are disordered. A compositionally biased stretch (acidic residues) spans 424–435 (EHDDSDDNDDEE). The segment covering 454-490 (EKERKIAMHTRNREETAEERKERKAAVKEEKREQRKE) has biased composition (basic and acidic residues). The span at 491-506 (KIPKHLKKRAHRQHMK) shows a compositional bias: basic residues.

Belongs to the protein kinase superfamily. RIO-type Ser/Thr kinase family. Mg(2+) is required as a cofactor. Expressed in vulva and uterine cells, uterine seam cells (utse), spermatheca and in the nervous system including chemosensory neurons in the head, nerve ring neurons (RID/RIF), inhibitory motor neurons (DA/DD/VA/VD), mechanosensory neurons (ALML/PLML) and tail sensory neurons (DVA//PDA). Also expressed in intestine and pharynx (procorpus) and rectal valve and gland.

The protein localises to the cytoplasm. The catalysed reaction is L-seryl-[protein] + ATP = O-phospho-L-seryl-[protein] + ADP + H(+). It carries out the reaction L-threonyl-[protein] + ATP = O-phospho-L-threonyl-[protein] + ADP + H(+). In terms of biological role, involved in the final steps of cytoplasmic maturation of the 40S ribosomal subunit. Despite the protein kinase domain is proposed to act predominantly as an ATPase. The catalytic activity regulates its dynamic association with the 40S subunit. Plays a role in oogenesis by regulating germ cell proliferation, progression through diplotene and diakinesis stages and oocyte maturation. Regulates germline development probably by regulating the phosphorylation of mpk-1. Involved in larval development. The chain is Serine/threonine-protein kinase RIO1 from Caenorhabditis elegans.